A 320-amino-acid polypeptide reads, in one-letter code: Zinc finger protein 330 (320 aa).

Positions 1-23 are disordered; that stretch reads MPKKKTGARKKAENRREREKQLR. The Nuclear localization signal motif lies at 3–11; it reads KKKTGARKK. Over residues 10–22 the composition is skewed to basic and acidic residues; it reads KKAENRREREKQL. C4-type zinc fingers lie at residues 42–58, 67–104, 129–149, and 175–189; these read CDKC…CYFC, CAQC…CDFC, CVEC…CSFC, and CVSC…CLRC. Disordered regions lie at residues 206–250 and 264–303; these read EKGK…ASGY and GASY…TNLN. The span at 216–225 shows a compositional bias: basic and acidic residues; it reads CGHETQETKD. A compositionally biased stretch (acidic residues) spans 269-287; that stretch reads DEEEDEYEAEDDEEEEDEG. Ser-291 carries the post-translational modification Phosphoserine.

Belongs to the NOA36 family.

Its subcellular location is the nucleus. It localises to the nucleolus. The protein resides in the chromosome. It is found in the centromere. This chain is Zinc finger protein 330 (ZNF330), found in Bos taurus (Bovine).